A 1697-amino-acid polypeptide reads, in one-letter code: Phosphatidylinositol 3-kinase 3 (1697 aa).

Disordered stretches follow at residues 57–91 (RSIN…TQPC), 169–229 (INNN…DSSI), 244–279 (KTTE…ENEI), 310–376 (KKNN…NSVG), 398–428 (SWTS…SGSS), and 440–504 (DLLK…NNDE). Composition is skewed to low complexity over residues 60–87 (NNNN…NNNN), 170–196 (NNNN…NNNN), and 212–222 (NNNSNNNNNIN). Low complexity-rich tracts occupy residues 312 to 374 (NNNN…TTNS) and 398 to 408 (SWTSSKPTSSS). Polar residues-rich tracts occupy residues 409-428 (IGFA…SGSS) and 444-456 (SPSS…SDIF). Residues 457 to 503 (NENNNNNNNNNNNNNNNNNNNNNNNNNNNNNNNNEELINNNNNNNND) show a composition bias toward low complexity. The region spanning 737–823 (PEFFVIRVHL…KGEIDLTMVE (87 aa)) is the PI3K-RBD domain. The 149-residue stretch at 888 to 1036 (VTENLQVRLL…QAIIIAFEFK (149 aa)) folds into the C2 PI3K-type domain. Residues 1060–1238 (GNELPVVTME…RVLSSGFLRY (179 aa)) form the PIK helical domain. A PI3K/PI4K catalytic domain is found at 1304–1581 (IPEKCKSMDS…LIHESIGTLT (278 aa)). The tract at residues 1310–1316 (SMDSAKV) is G-loop. Residues 1447 to 1455 (GIGDRHNDN) are catalytic loop. The tract at residues 1466–1492 (HIDFGHFLGNFKTFAGFQREKAPFVLT) is activation loop. Over residues 1609 to 1625 (ASSLNLNKNKPSSQSKL) the composition is skewed to low complexity. The segment at 1609 to 1697 (ASSLNLNKNK…DTEKENSIDK (89 aa)) is disordered. A run of 5 repeats spans residues 1622-1626 (QSKLD), 1627-1631 (LSRSD), 1632-1636 (LSRSD), 1642-1646 (SSRLD), and 1647-1651 (LSRSD). Positions 1622–1651 (QSKLDLSRSDLSRSDSSRSDSSRLDLSRSD) are 5 X 5 AA approximate repeats. Composition is skewed to basic and acidic residues over residues 1626–1681 (DLSR…DKDN) and 1688–1697 (DTEKENSIDK). The segment at 1659-1672 (KEKEKEKEKEKEKE) is 7 X 2 AA tandem repeats of K-E.

This sequence belongs to the PI3/PI4-kinase family.

The catalysed reaction is a 1,2-diacyl-sn-glycero-3-phospho-(1D-myo-inositol) + ATP = a 1,2-diacyl-sn-glycero-3-phospho-(1D-myo-inositol-3-phosphate) + ADP + H(+). The sequence is that of Phosphatidylinositol 3-kinase 3 (pikC) from Dictyostelium discoideum (Social amoeba).